The following is an 89-amino-acid chain: Large ribosomal subunit protein bL27 (89 aa).

A disordered region spans residues 1-22 (MAHKKAGGSSRNGRDSAGRRLG).

It belongs to the bacterial ribosomal protein bL27 family.

In Sphingopyxis alaskensis (strain DSM 13593 / LMG 18877 / RB2256) (Sphingomonas alaskensis), this protein is Large ribosomal subunit protein bL27.